The chain runs to 332 residues: Anthranilate phosphoribosyltransferase (332 aa).

5-phospho-alpha-D-ribose 1-diphosphate contacts are provided by residues Gly79, 82 to 83, Thr87, 89 to 92, 107 to 115, and Ala119; these read GD, NIST, and KHGNYGATS. Gly79 contacts anthranilate. Ser91 is a binding site for Mg(2+). Asn110 contributes to the anthranilate binding site. Residue Arg165 participates in anthranilate binding. Mg(2+) is bound by residues Asp223 and Glu224.

Belongs to the anthranilate phosphoribosyltransferase family. Homodimer. Mg(2+) is required as a cofactor.

It carries out the reaction N-(5-phospho-beta-D-ribosyl)anthranilate + diphosphate = 5-phospho-alpha-D-ribose 1-diphosphate + anthranilate. It functions in the pathway amino-acid biosynthesis; L-tryptophan biosynthesis; L-tryptophan from chorismate: step 2/5. Functionally, catalyzes the transfer of the phosphoribosyl group of 5-phosphorylribose-1-pyrophosphate (PRPP) to anthranilate to yield N-(5'-phosphoribosyl)-anthranilate (PRA). In Bacteroides thetaiotaomicron (strain ATCC 29148 / DSM 2079 / JCM 5827 / CCUG 10774 / NCTC 10582 / VPI-5482 / E50), this protein is Anthranilate phosphoribosyltransferase.